Consider the following 129-residue polypeptide: Large ribosomal subunit protein bL19c (129 aa).

Belongs to the bacterial ribosomal protein bL19 family.

It localises to the plastid. In Prototheca wickerhamii, this protein is Large ribosomal subunit protein bL19c.